Consider the following 517-residue polypeptide: Ribonuclease Y (517 aa).

Residues 1–21 (MIEVVVGIGAGLIGIGAGYLV) form a helical membrane-spanning segment. The region spanning 207–273 (LINVVNIKND…TRVIELLVED (67 aa)) is the KH domain. One can recognise an HD domain in the interval 333 to 426 (ALAHSLEVAH…VCAADALSAA (94 aa)).

Belongs to the RNase Y family.

Its subcellular location is the cell membrane. Endoribonuclease that initiates mRNA decay. This Campylobacter fetus subsp. fetus (strain 82-40) protein is Ribonuclease Y.